Here is a 109-residue protein sequence, read N- to C-terminus: uncharacterized protein (109 aa).

The helical transmembrane segment at 90–107 (IICNFWGSLLGVGIAFYQ) threads the bilayer.

The protein resides in the membrane. This is an uncharacterized protein from Saccharomyces cerevisiae (strain ATCC 204508 / S288c) (Baker's yeast).